Reading from the N-terminus, the 363-residue chain is G-protein coupled receptor 78 (363 aa).

Residues 1–7 are Extracellular-facing; the sequence is MGPGEAL. A helical transmembrane segment spans residues 8-28; that stretch reads LAGLLVMVLAVALLSNALVLL. The Cytoplasmic segment spans residues 29–47; sequence CCAYSAELRTRASGVLLVN. Residues 48–68 traverse the membrane as a helical segment; that stretch reads LSLGHLLLAALDMPFTLLGVM. Topologically, residues 69 to 80 are extracellular; the sequence is RGRTPSAPGACQ. A disulfide bridge links Cys79 with Cys156. A helical membrane pass occupies residues 81–101; that stretch reads VIGFLDTFLASNAALSVAALS. Topologically, residues 102–122 are cytoplasmic; that stretch reads ADQWLAVGFPLRYAGRLRPRY. A helical transmembrane segment spans residues 123–143; the sequence is AGLLLGCAWGQSLAFSGAALG. Residues 144–168 are Extracellular-facing; sequence CSWLGYSSAFASCSLRLPPEPERPR. Residues 169–189 traverse the membrane as a helical segment; that stretch reads FAAFTATLHAVGFVLPLAVLC. Residues 190–242 are Cytoplasmic-facing; the sequence is LTSLQVHRVARRHCQRMDTVTMKALALLADLHPSVRQRCLIQQKRRRHRATRK. The helical transmembrane segment at 243-263 threads the bilayer; sequence IGIAIATFLICFAPYVMTRLA. Over 264–277 the chain is Extracellular; it reads ELVPFVTVNAQWGI. A helical membrane pass occupies residues 278–297; it reads LSKCLTYSKAVADPFTYSLL. The Cytoplasmic portion of the chain corresponds to 298–363; the sequence is RRPFRQVLAG…ENDSCLQQTH (66 aa). Positions 340-363 are disordered; the sequence is TPRPASTHNGSVDTENDSCLQQTH. A compositionally biased stretch (polar residues) spans 343-363; it reads PASTHNGSVDTENDSCLQQTH.

The protein belongs to the G-protein coupled receptor 1 family. In terms of tissue distribution, high level of expression in placenta. Expressed throughout the brain at low level. No expression detected in skeletal muscle, lung, heart, liver, pancreas, or kidney.

The protein resides in the cell membrane. Its function is as follows. Orphan receptor. Displays a significant level of constitutive activity. Its effect is mediated by G(s)-alpha protein that stimulate adenylate cyclase, resulting in an elevation of intracellular cAMP. In Homo sapiens (Human), this protein is G-protein coupled receptor 78 (GPR78).